Reading from the N-terminus, the 316-residue chain is Acetaldehyde dehydrogenase (316 aa).

11–14 (SGNI) is an NAD(+) binding site. The Acyl-thioester intermediate role is filled by Cys131. NAD(+) is bound by residues 162 to 170 (SAGPGTRAN) and Asn289.

The protein belongs to the acetaldehyde dehydrogenase family. In terms of assembly, interacts with MhpE.

The enzyme catalyses acetaldehyde + NAD(+) + CoA = acetyl-CoA + NADH + H(+). Its pathway is aromatic compound metabolism; 3-phenylpropanoate degradation. Functionally, catalyzes the conversion of acetaldehyde to acetyl-CoA, using NAD(+) and coenzyme A. Is the final enzyme in the meta-cleavage pathway for the degradation of aromatic compounds. The protein is Acetaldehyde dehydrogenase of Escherichia coli O157:H7.